A 188-amino-acid polypeptide reads, in one-letter code: Elongation factor P (188 aa).

Belongs to the elongation factor P family.

It is found in the cytoplasm. It functions in the pathway protein biosynthesis; polypeptide chain elongation. Involved in peptide bond synthesis. Stimulates efficient translation and peptide-bond synthesis on native or reconstituted 70S ribosomes in vitro. Probably functions indirectly by altering the affinity of the ribosome for aminoacyl-tRNA, thus increasing their reactivity as acceptors for peptidyl transferase. The chain is Elongation factor P (efp) from Ureaplasma parvum serovar 3 (strain ATCC 700970).